A 495-amino-acid polypeptide reads, in one-letter code: Guanosine-5'-triphosphate,3'-diphosphate pyrophosphatase (495 aa).

It belongs to the GppA/Ppx family. GppA subfamily.

It carries out the reaction guanosine 3'-diphosphate 5'-triphosphate + H2O = guanosine 3',5'-bis(diphosphate) + phosphate + H(+). Its pathway is purine metabolism; ppGpp biosynthesis; ppGpp from GTP: step 2/2. Catalyzes the conversion of pppGpp to ppGpp. Guanosine pentaphosphate (pppGpp) is a cytoplasmic signaling molecule which together with ppGpp controls the 'stringent response', an adaptive process that allows bacteria to respond to amino acid starvation, resulting in the coordinated regulation of numerous cellular activities. In Enterobacter sp. (strain 638), this protein is Guanosine-5'-triphosphate,3'-diphosphate pyrophosphatase.